A 300-amino-acid polypeptide reads, in one-letter code: 2-dehydropantoate 2-reductase (300 aa).

NADP(+) is bound by residues 7 to 12, Lys-74, Asn-99, and Ala-123; that span reads GAGAIG. Residue Lys-179 is the Proton donor of the active site. Substrate contacts are provided by residues Lys-179, Asn-183, Asn-187, Asn-197, and 246–249; that span reads NYNS. Position 261 (Glu-261) interacts with NADP(+).

Belongs to the ketopantoate reductase family.

The protein resides in the cytoplasm. It carries out the reaction (R)-pantoate + NAD(+) = 2-dehydropantoate + NADH + H(+). It catalyses the reaction (R)-pantoate + NADP(+) = 2-dehydropantoate + NADPH + H(+). The protein operates within cofactor biosynthesis; coenzyme A biosynthesis. In terms of biological role, catalyzes the NAD(P)H-dependent reduction of ketopantoate into pantoic acid. The sequence is that of 2-dehydropantoate 2-reductase (apbA) from Pyrococcus abyssi (strain GE5 / Orsay).